The primary structure comprises 100 residues: Protein MEN-8 (100 aa).

An N-terminal signal peptide occupies residues Met-1–Ala-33. 4 disulfide bridges follow: Cys-38–Cys-76, Cys-48–Cys-65, Cys-66–Cys-91, and Cys-78–Cys-98.

The protein belongs to the A9/FIL1 family.

The protein resides in the secreted. The sequence is that of Protein MEN-8 (MEN-8) from Silene latifolia (White campion).